The chain runs to 866 residues: Rifampicin phosphotransferase (866 aa).

Positions 1 to 313 (MSSLVLGLHE…FYIVQSRPIT (313 aa)) are ATP-binding. Positions 22, 116, 131, 135, 182, 296, 308, and 310 each coordinate ATP. A rifampicin-binding region spans residues 326–754 (NHVYISVGHQ…TSDGEIVTGE (429 aa)). Residues 410–429 (IPNDKTAPNPSRGNADMPAQ) are disordered. The segment at 767-865 (GLPVSSGVIE…VHGTEGYIEI (99 aa)) is swivel phosphohistidine. His825 serves as the catalytic Tele-phosphohistidine intermediate.

It belongs to the rifampicin phosphotransferase family.

The catalysed reaction is rifampicin + ATP + H2O = 21-phosphorifampicin + AMP + phosphate + 2 H(+). In terms of biological role, catalyzes the phosphorylation of rifampicin, also known as rifampin (RIF), leading to its inactivation. The sequence is that of Rifampicin phosphotransferase from Bacillus subtilis (strain 168).